The following is a 31-amino-acid chain: Cytochrome b6-f complex subunit 8 (31 aa).

Residues 5–25 (IVSLAWAALMVVFTFSLSLVV) traverse the membrane as a helical segment.

It belongs to the PetN family. In terms of assembly, the 4 large subunits of the cytochrome b6-f complex are cytochrome b6, subunit IV (17 kDa polypeptide, PetD), cytochrome f and the Rieske protein, while the 4 small subunits are PetG, PetL, PetM and PetN. The complex functions as a dimer.

It is found in the plastid. The protein localises to the chloroplast thylakoid membrane. Functionally, component of the cytochrome b6-f complex, which mediates electron transfer between photosystem II (PSII) and photosystem I (PSI), cyclic electron flow around PSI, and state transitions. In Acorus calamus (Sweet flag), this protein is Cytochrome b6-f complex subunit 8.